The chain runs to 492 residues: Steroid 21-hydroxylase (492 aa).

The heme b site is built by arginine 92 and lysine 121. 17alpha-hydroxyprogesterone is bound at residue arginine 232. Arginine 232 lines the progesterone pocket. Histidine 364, arginine 425, and cysteine 427 together coordinate heme b.

It belongs to the cytochrome P450 family. Requires heme b as cofactor.

Its subcellular location is the endoplasmic reticulum membrane. The protein resides in the microsome membrane. It catalyses the reaction progesterone + reduced [NADPH--hemoprotein reductase] + O2 = 21-hydroxyprogesterone + oxidized [NADPH--hemoprotein reductase] + H2O + H(+). The enzyme catalyses 17alpha-hydroxyprogesterone + reduced [NADPH--hemoprotein reductase] + O2 = 11-deoxycortisol + oxidized [NADPH--hemoprotein reductase] + H2O + H(+). A cytochrome P450 monooxygenase that plays a major role in adrenal steroidogenesis. Catalyzes the hydroxylation at C-21 of progesterone and 17alpha-hydroxyprogesterone to respectively form 11-deoxycorticosterone and 11-deoxycortisol, intermediate metabolites in the biosynthetic pathway of mineralocorticoids and glucocorticoids. Mechanistically, uses molecular oxygen inserting one oxygen atom into a substrate, and reducing the second into a water molecule, with two electrons provided by NADPH via cytochrome P450 reductase (CPR; NADPH-ferrihemoprotein reductase). This is Steroid 21-hydroxylase (CYP21) from Sus scrofa (Pig).